The sequence spans 237 residues: MOB kinase activator 2 (237 aa).

Positions 1-21 are disordered; it reads MDWLMGKSKAKPNGKKPAAEE. Zn(2+) is bound by residues Cys-78, Cys-83, His-157, and His-162. Over residues 217–229 the composition is skewed to gly residues; the sequence is GGSGDGAGSGGPG. The segment at 217–237 is disordered; it reads GGSGDGAGSGGPGAQNHVKER.

Belongs to the MOB1/phocein family. Binds STK38 and STK38L. Phosphorylated.

It is found in the nucleus. It localises to the cytoplasm. The protein resides in the perinuclear region. Stimulates the autophosphorylation and kinase activity of STK38 and STK38L. The polypeptide is MOB kinase activator 2 (MOB2) (Homo sapiens (Human)).